The chain runs to 224 residues: uncharacterized protein (224 aa).

This is an uncharacterized protein from Mycobacterium tuberculosis (strain ATCC 25618 / H37Rv).